An 81-amino-acid polypeptide reads, in one-letter code: MKIVIIFFIAMMAVGVYSKDGYLVKKNGCKYDCTPLFGDSNCNGECKAFKASWGSCYWFACYCRGLPDSVPTYPSSKTCSS.

An N-terminal signal peptide occupies residues 1 to 18 (MKIVIIFFIAMMAVGVYS). In terms of domain architecture, LCN-type CS-alpha/beta spans 19–80 (KDGYLVKKNG…PTYPSSKTCS (62 aa)). 4 cysteine pairs are disulfide-bonded: Cys-29–Cys-79, Cys-33–Cys-56, Cys-42–Cys-61, and Cys-46–Cys-63.

Belongs to the long (4 C-C) scorpion toxin superfamily. Sodium channel inhibitor family. Beta subfamily. Expressed by the venom gland.

It localises to the secreted. In terms of biological role, binds voltage-independently at site-4 of sodium channels (Nav) and shift the voltage of activation toward more negative potentials thereby affecting sodium channel activation and promoting spontaneous and repetitive firing. In Lychas mucronatus (Chinese swimming scorpion), this protein is Neurotoxin LmNaTx11.1.